We begin with the raw amino-acid sequence, 91 residues long: Small ribosomal subunit protein uS19 (91 aa).

It belongs to the universal ribosomal protein uS19 family.

Functionally, protein S19 forms a complex with S13 that binds strongly to the 16S ribosomal RNA. The polypeptide is Small ribosomal subunit protein uS19 (Cupriavidus necator (strain ATCC 17699 / DSM 428 / KCTC 22496 / NCIMB 10442 / H16 / Stanier 337) (Ralstonia eutropha)).